The chain runs to 306 residues: Cysteine synthase (306 aa).

Lys46 carries the post-translational modification N6-(pyridoxal phosphate)lysine. Residues Asn76, 180–184, and Ser267 each bind pyridoxal 5'-phosphate; that span reads GSGGT.

This sequence belongs to the cysteine synthase/cystathionine beta-synthase family. Homodimer. Requires pyridoxal 5'-phosphate as cofactor.

It catalyses the reaction O-acetyl-L-serine + hydrogen sulfide = L-cysteine + acetate. It functions in the pathway amino-acid biosynthesis; L-cysteine biosynthesis; L-cysteine from L-serine: step 2/2. This is Cysteine synthase (cysM) from Helicobacter pylori (strain ATCC 700392 / 26695) (Campylobacter pylori).